The chain runs to 463 residues: Phosphoglycerate transporter protein (463 aa).

Residues 1-29 (MLTILKTGQSAHKVPPEKVQATYGRYRIQ) lie on the Cytoplasmic side of the membrane. Transmembrane regions (helical) follow at residues 30–50 (ALLS…NFTL), 59–79 (LDLS…AYGI), 106–126 (IVNV…LVVF), 127–147 (NGLF…NWFP), 160–180 (ISHN…FAIL), 188–208 (ASYI…LVLG), 267–287 (VFVY…LLTV), 297–317 (VAFL…GWLS), 326–346 (MPLA…YWKS), 349–369 (LLMV…PQFL), 391–411 (GFMS…VMVD), and 413–433 (LGWY…ILFC).

The protein belongs to the major facilitator superfamily. Organophosphate:Pi antiporter (OPA) (TC 2.A.1.4) family.

It localises to the cell inner membrane. Functionally, the phosphoglycerate transporter protein is a part of the PGT transport system. It is the membrane bound transporter for phosphoglycerate into salmonella. This chain is Phosphoglycerate transporter protein (pgtP), found in Salmonella typhimurium (strain LT2 / SGSC1412 / ATCC 700720).